The chain runs to 285 residues: Pantothenate synthetase (285 aa).

30–37 (MGFLHEGH) lines the ATP pocket. H37 (proton donor) is an active-site residue. (R)-pantoate is bound at residue Q61. Q61 serves as a coordination point for beta-alanine. 147–150 (GQKD) lines the ATP pocket. (R)-pantoate is bound at residue Q153. Residues V176 and 184 to 187 (KSSR) each bind ATP.

It belongs to the pantothenate synthetase family. Homodimer.

The protein localises to the cytoplasm. It carries out the reaction (R)-pantoate + beta-alanine + ATP = (R)-pantothenate + AMP + diphosphate + H(+). It functions in the pathway cofactor biosynthesis; (R)-pantothenate biosynthesis; (R)-pantothenate from (R)-pantoate and beta-alanine: step 1/1. In terms of biological role, catalyzes the condensation of pantoate with beta-alanine in an ATP-dependent reaction via a pantoyl-adenylate intermediate. In Listeria welshimeri serovar 6b (strain ATCC 35897 / DSM 20650 / CCUG 15529 / CIP 8149 / NCTC 11857 / SLCC 5334 / V8), this protein is Pantothenate synthetase.